We begin with the raw amino-acid sequence, 70 residues long: Large ribosomal subunit protein bL31 (70 aa).

Residues Cys-16, Cys-18, Cys-36, and Cys-39 each contribute to the Zn(2+) site.

The protein belongs to the bacterial ribosomal protein bL31 family. Type A subfamily. Part of the 50S ribosomal subunit. Requires Zn(2+) as cofactor.

Its function is as follows. Binds the 23S rRNA. The chain is Large ribosomal subunit protein bL31 from Fervidobacterium nodosum (strain ATCC 35602 / DSM 5306 / Rt17-B1).